Consider the following 307-residue polypeptide: NmrA-like family domain-containing oxidoreductase flvB (307 aa).

Residues 4–9, 32–36, 53–54, 74–76, and 148–151 contribute to the NADP(+) site; these read LITGAT, SSSSP, DY, STN, and YVEG.

Belongs to the NmrA-type oxidoreductase family.

It carries out the reaction (2S)-5,5-dimethyl-2,3,4,5-tetrahydropyridine-2,6-dicarboxylate + NADPH + 2 H(+) = (6S)-3,3-dimethylpiperidine-2,6-dicarboxylate + NADP(+). It catalyses the reaction (2S)-5,5-dimethyl-2,3,4,5-tetrahydropyridine-2,6-dicarboxylate + NADH + 2 H(+) = (6S)-3,3-dimethylpiperidine-2,6-dicarboxylate + NAD(+). It functions in the pathway secondary metabolite biosynthesis; terpenoid biosynthesis. Its function is as follows. NmrA-like family domain-containing oxidoreductase; part of the gene cluster that mediates the biosynthesis of flavunoidine, an alkaloidal terpenoid with a tetracyclic cage-like core connected to dimethylcadaverine via a C-N bond and acylated with 5,5-dimethyl-L-pipecolate. The tetracyclic core is synthesized by the terpene cyclase flvE and the cytochrome P450 monooxygenase flvD. The terpene cyclase flvE catalyzes the cyclization of farnesyl pyrophosphate (FPP) to form (1R,4R,5S)-(+)-acoradiene and the cytochrome P450 monooxygenase flvD is then responsible for oxidative conversion of (1R,4R,5S)-(+)-acoradiene into the tetracyclic cage present in the final product flavunoidine. In parallel, the N-methyltransferase flvH dimethylates L-lysine to give N,N-dimethyl-L-Lysin which is decarboxylated by flvG to afford dimethylcadaverine. The terpene cyclase-like protein flvF is the enzyme that attaches the dimethylcadaverine precusor at the C-7 of the tetracyclic cage to yield pre-flavunoidine. The cytochrome monooxygenase flvC hydroxylates the C-10 position of pre-flavunoidine whereas the NRPS flvI acylates the terpenoid core at the hydroxylated C-10 with dimethylpipecolate to yield final flavunoidine. The bifunctional enzyme flvA and the dehydrogenase flvB are responsible for the synthesis of the dimethylpipecolate precursor. The PLP-dependent lyase domain of flvA might use L-O-acetyl-homoserine and alpha-keto-isovalerate to form an intermediary ketone that can cyclize intramolecularly to yield an imine. The imine can be reduced by flvB to yield the 6-carboxylated pipecolate. The C-terminal alpha-KG-dependent oxygenase domain of flvA is then proposed to catalyze the decarboxylation to yield dimethylpipecolate. This Aspergillus flavus (strain ATCC 200026 / FGSC A1120 / IAM 13836 / NRRL 3357 / JCM 12722 / SRRC 167) protein is NmrA-like family domain-containing oxidoreductase flvB.